A 66-amino-acid polypeptide reads, in one-letter code: Large ribosomal subunit protein uL29 (66 aa).

This sequence belongs to the universal ribosomal protein uL29 family.

This chain is Large ribosomal subunit protein uL29, found in Hydrogenobaculum sp. (strain Y04AAS1).